The sequence spans 149 residues: Ribonuclease-like 3 (149 aa).

The first 22 residues, methionine 1 to glycine 22, serve as a signal peptide directing secretion. Pyrrolidone carboxylic acid is present on glutamine 23. Histidine 38 serves as the catalytic Proton acceptor. 3 disulfides stabilise this stretch: cysteine 48/cysteine 109, cysteine 66/cysteine 120, and cysteine 84/cysteine 135. Position 67 to 71 (lysine 67 to threonine 71) interacts with substrate. Histidine 142 (proton donor) is an active-site residue.

It belongs to the pancreatic ribonuclease family. In terms of processing, cleavage between Arg-55 and Arg-56 is catalyzed by a membrane-localized Gram-negative bacterium protease (OmpT in E.coli). The excised fragment is then transported to the bacterium cytosol for cleavage of the disulfide bridge linking Cys-48 and Cys-109, thus separating the N-terminal and LF-ZF3. LF-ZF3 but not the N-terminal peptide possesses bactericidal activity. As to expression, strongly expressed in the adult liver and gut, and weakly in the heart and testis.

It is found in the secreted. Its function is as follows. Ribonuclease. Angiogenic. Plays a role in host defense. Exhibits strong antibacterial activity against Gram-negative bacteria but mild antibacterial activity against Gram-positive bacteria. The RNase activity is not required for the bactericidal activity. This chain is Ribonuclease-like 3, found in Danio rerio (Zebrafish).